The primary structure comprises 377 residues: Succinyl-diaminopimelate desuccinylase (377 aa).

H68 provides a ligand contact to Zn(2+). Residue D70 is part of the active site. Residue D101 coordinates Zn(2+). E135 functions as the Proton acceptor in the catalytic mechanism. Zn(2+) contacts are provided by E136, E164, and H350.

It belongs to the peptidase M20A family. DapE subfamily. In terms of assembly, homodimer. The cofactor is Zn(2+). Co(2+) is required as a cofactor.

It carries out the reaction N-succinyl-(2S,6S)-2,6-diaminopimelate + H2O = (2S,6S)-2,6-diaminopimelate + succinate. The protein operates within amino-acid biosynthesis; L-lysine biosynthesis via DAP pathway; LL-2,6-diaminopimelate from (S)-tetrahydrodipicolinate (succinylase route): step 3/3. Functionally, catalyzes the hydrolysis of N-succinyl-L,L-diaminopimelic acid (SDAP), forming succinate and LL-2,6-diaminopimelate (DAP), an intermediate involved in the bacterial biosynthesis of lysine and meso-diaminopimelic acid, an essential component of bacterial cell walls. This chain is Succinyl-diaminopimelate desuccinylase, found in Acinetobacter baumannii (strain AB307-0294).